The sequence spans 632 residues: MNASESCEELNATLSAYLESLDSRQRQVEEIRQLHHKVWAMKTNHAPIIEHRAGSRVEKQTRICPNDIRSDIDFMLEVNNVVVFAKGNGGICFQPTSRDGYFGRILISDQYRDSLMIDTHLKAIFTESSLKRDKFSNRFVLVPNVFKQNVVRESGLKYQQTKSPQSTGPSIPGRGVVNEYDVVPCLRLNTWPEETTTWISRGKPLSVFDPSWRKKVLVASPVFLVAAGEINSCFQKEQFRTSFSMPEIECFKKLPNLVRQLFGLAKYVFTYLLSSVGFLSWFHIKYLLFWMVEKDEIDWNNISPVCFLFHLMDSIKQSVRDGNVQHFFLDNCNIFPEHRRTYEREYAYDQILSDKQLVTECLKRLLRTELLETSRTVMASEFTNTESRLVSSNTYCDGYLTRLLSVIVFVWQETSASEKMSSSFAEKILEDCGVNEYTRKLVTILELYFRGNVPGKLSLNSLAHGAFLAYMQGDFAVCLSSCSQHVTSTCVRDDDCILGVTLTRYDRTPHLDEPLRFALDRLEQKFGTCPRVSLHPLFFLKHVLLQCELKKRDNGLKCLDTLFSDLHGFSKSLSPRTPYCGLLSYQAVAFLVIEGYNEYFKRENIDIRLYETDTYVKLDISLTPATCSFDLR.

Positions 71, 73, and 181 each coordinate Mg(2+). Position 295 (Asp-295) interacts with Mn(2+).

The protein belongs to the mab-21 family. It depends on Mg(2+) as a cofactor. Mn(2+) is required as a cofactor.

Functionally, nucleotidyltransferase that catalyzes the formation of some cyclic nucleotide and plays a key role in innate immunity. Directly binds some unknown ligand, activating the nucleotidyltransferase activity, leading to synthesis of a second messenger that binds to and activates Sting, thereby triggering the immune response via activation of the NF-kappa-B transcription factor. The chain is Cyclic GMP-AMP synthase-like receptor 2 from Crassostrea virginica (Eastern oyster).